A 295-amino-acid polypeptide reads, in one-letter code: Pyridoxal 5'-phosphate synthase subunit PdxS (295 aa).

A D-ribose 5-phosphate-binding site is contributed by Asp25. Lys82 serves as the catalytic Schiff-base intermediate with D-ribose 5-phosphate. D-ribose 5-phosphate is bound at residue Gly154. Arg166 provides a ligand contact to D-glyceraldehyde 3-phosphate. D-ribose 5-phosphate is bound by residues Gly215 and 236 to 237 (GS).

Belongs to the PdxS/SNZ family. In terms of assembly, in the presence of PdxT, forms a dodecamer of heterodimers.

It carries out the reaction aldehydo-D-ribose 5-phosphate + D-glyceraldehyde 3-phosphate + L-glutamine = pyridoxal 5'-phosphate + L-glutamate + phosphate + 3 H2O + H(+). The protein operates within cofactor biosynthesis; pyridoxal 5'-phosphate biosynthesis. Catalyzes the formation of pyridoxal 5'-phosphate from ribose 5-phosphate (RBP), glyceraldehyde 3-phosphate (G3P) and ammonia. The ammonia is provided by the PdxT subunit. Can also use ribulose 5-phosphate and dihydroxyacetone phosphate as substrates, resulting from enzyme-catalyzed isomerization of RBP and G3P, respectively. This chain is Pyridoxal 5'-phosphate synthase subunit PdxS, found in Pasteurella multocida (strain Pm70).